Reading from the N-terminus, the 192-residue chain is NF-kappa-B inhibitor-interacting Ras-like protein 1 (192 aa).

The small GTPase-like stretch occupies residues 1–192 (MGKGCKVVVC…KSKGTPSNDI (192 aa)). GTP is bound at residue 11 to 18 (GMASVGKT). Positions 35–43 (TSDTQEDIY) match the Effector region motif. GTP contacts are provided by residues 61–65 (DTRGL) and 120–123 (NKCE). The disordered stretch occupies residues 169 to 192 (TQPQSKSAFPLPGRKSKGTPSNDI).

The protein belongs to the small GTPase superfamily. Ras family. KappaB-Ras subfamily.

It is found in the cytoplasm. Atypical Ras-like protein that acts as a potent regulator of NF-kappa-B activity by preventing the degradation of NF-kappa-B inhibitor beta (NFKBIB) by most signals, explaining why NFKBIB is more resistant to degradation. This chain is NF-kappa-B inhibitor-interacting Ras-like protein 1 (nkiras1), found in Danio rerio (Zebrafish).